We begin with the raw amino-acid sequence, 372 residues long: Queuine tRNA-ribosyltransferase (372 aa).

Asp92 functions as the Proton acceptor in the catalytic mechanism. Residues 92–96, Asp146, Gln188, and Gly215 each bind substrate; that span reads DSGGY. Positions 246 to 252 are RNA binding; it reads GIGSLKE. Catalysis depends on Asp265, which acts as the Nucleophile. Residues 270 to 274 are RNA binding; important for wobble base 34 recognition; the sequence is TRLGR. Zn(2+) is bound by residues Cys303, Cys305, Cys308, and His334.

The protein belongs to the queuine tRNA-ribosyltransferase family. Homodimer. Within each dimer, one monomer is responsible for RNA recognition and catalysis, while the other monomer binds to the replacement base PreQ1. It depends on Zn(2+) as a cofactor.

It catalyses the reaction 7-aminomethyl-7-carbaguanine + guanosine(34) in tRNA = 7-aminomethyl-7-carbaguanosine(34) in tRNA + guanine. It functions in the pathway tRNA modification; tRNA-queuosine biosynthesis. In terms of biological role, catalyzes the base-exchange of a guanine (G) residue with the queuine precursor 7-aminomethyl-7-deazaguanine (PreQ1) at position 34 (anticodon wobble position) in tRNAs with GU(N) anticodons (tRNA-Asp, -Asn, -His and -Tyr). Catalysis occurs through a double-displacement mechanism. The nucleophile active site attacks the C1' of nucleotide 34 to detach the guanine base from the RNA, forming a covalent enzyme-RNA intermediate. The proton acceptor active site deprotonates the incoming PreQ1, allowing a nucleophilic attack on the C1' of the ribose to form the product. After dissociation, two additional enzymatic reactions on the tRNA convert PreQ1 to queuine (Q), resulting in the hypermodified nucleoside queuosine (7-(((4,5-cis-dihydroxy-2-cyclopenten-1-yl)amino)methyl)-7-deazaguanosine). The protein is Queuine tRNA-ribosyltransferase of Prochlorococcus marinus (strain MIT 9301).